The chain runs to 306 residues: Serrate RNA effector molecule homolog (306 aa).

The disordered stretch occupies residues 1–28 (HKEEELLGSSGGPPPEEPPKEGNPAEIN). At Thr101 the chain carries Phosphothreonine. At Ser109 the chain carries Phosphoserine. Residues 251 to 284 (GPPYPHGPYGAGRGNYDAFRGQGGYPGKPRNRMV) form a disordered region. Omega-N-methylarginine is present on residues Arg263, Arg270, and Arg280.

The protein belongs to the ARS2 family. Interacts with CASP8AP2, ERBB4, NCBP1/CBP80 and DROSHA. Interacts with LUZP4. Interacts with NCBP2/CBP20 and NCBP3.

It localises to the nucleus. The protein resides in the nucleoplasm. Its subcellular location is the cytoplasm. Its function is as follows. Acts as a mediator between the cap-binding complex (CBC) and the primary microRNAs (miRNAs) processing machinery during cell proliferation. Contributes to the stability and delivery of capped primary miRNA transcripts to the primary miRNA processing complex containing DGCR8 and DROSHA, thereby playing a role in RNA-mediated gene silencing (RNAi) by miRNAs. Binds capped RNAs (m7GpppG-capped RNA); however interaction is probably mediated via its interaction with NCBP1/CBP80 component of the CBC complex. Involved in cell cycle progression at S phase. Does not directly confer arsenite resistance but rather modulates arsenic sensitivity. Independently of its activity on miRNAs, necessary and sufficient to promote neural stem cell self-renewal. Does so by directly binding SOX2 promoter and positively regulating its transcription. In Cricetulus griseus (Chinese hamster), this protein is Serrate RNA effector molecule homolog (SRRT).